The following is a 210-amino-acid chain: Na(+)-translocating NADH-quinone reductase subunit D (210 aa).

Helical transmembrane passes span 14–34 (PIVN…ALAV), 42–62 (LVMA…ISMI), 72–92 (IIVQ…LLQA), 103–123 (VFVG…AYAM), 131–151 (FMDG…VGFV), and 178–198 (NGLL…IWII).

Belongs to the NqrDE/RnfAE family. In terms of assembly, composed of six subunits; NqrA, NqrB, NqrC, NqrD, NqrE and NqrF.

It localises to the cell inner membrane. It catalyses the reaction a ubiquinone + n Na(+)(in) + NADH + H(+) = a ubiquinol + n Na(+)(out) + NAD(+). In terms of biological role, NQR complex catalyzes the reduction of ubiquinone-1 to ubiquinol by two successive reactions, coupled with the transport of Na(+) ions from the cytoplasm to the periplasm. NqrA to NqrE are probably involved in the second step, the conversion of ubisemiquinone to ubiquinol. This is Na(+)-translocating NADH-quinone reductase subunit D from Shewanella sp. (strain ANA-3).